The following is a 459-amino-acid chain: Argininosuccinate lyase (459 aa).

Belongs to the lyase 1 family. Argininosuccinate lyase subfamily.

The protein resides in the cytoplasm. It catalyses the reaction 2-(N(omega)-L-arginino)succinate = fumarate + L-arginine. The protein operates within amino-acid biosynthesis; L-arginine biosynthesis; L-arginine from L-ornithine and carbamoyl phosphate: step 3/3. This is Argininosuccinate lyase from Prochlorococcus marinus subsp. pastoris (strain CCMP1986 / NIES-2087 / MED4).